A 166-amino-acid polypeptide reads, in one-letter code: Cyanate hydratase (166 aa).

Catalysis depends on residues Arg106, Glu109, and Ser132.

The protein belongs to the cyanase family.

It catalyses the reaction cyanate + hydrogencarbonate + 3 H(+) = NH4(+) + 2 CO2. Catalyzes the reaction of cyanate with bicarbonate to produce ammonia and carbon dioxide. In Verticillium alfalfae (strain VaMs.102 / ATCC MYA-4576 / FGSC 10136) (Verticillium wilt of alfalfa), this protein is Cyanate hydratase.